The following is a 142-amino-acid chain: Transcriptional regulator MraZ (142 aa).

SpoVT-AbrB domains are found at residues 5–46 (THPV…DRSE) and 75–118 (AAAQ…DSEA).

This sequence belongs to the MraZ family. In terms of assembly, forms oligomers.

Its subcellular location is the cytoplasm. The protein localises to the nucleoid. The sequence is that of Transcriptional regulator MraZ from Tropheryma whipplei (strain TW08/27) (Whipple's bacillus).